The primary structure comprises 359 residues: Peptide chain release factor 1 (359 aa).

Gln236 is modified (N5-methylglutamine).

This sequence belongs to the prokaryotic/mitochondrial release factor family. Post-translationally, methylated by PrmC. Methylation increases the termination efficiency of RF1.

Its subcellular location is the cytoplasm. Its function is as follows. Peptide chain release factor 1 directs the termination of translation in response to the peptide chain termination codons UAG and UAA. In Streptococcus pneumoniae serotype 19F (strain G54), this protein is Peptide chain release factor 1.